The following is a 414-amino-acid chain: 3-oxoacyl-[acyl-carrier-protein] synthase 2 (414 aa).

One can recognise a Ketosynthase family 3 (KS3) domain in the interval 4–411; the sequence is NKRVVITGMG…GHNAVLVFKK (408 aa). Active-site for beta-ketoacyl synthase activity residues include Cys-165, His-304, and His-341.

Belongs to the thiolase-like superfamily. Beta-ketoacyl-ACP synthases family.

It catalyses the reaction a fatty acyl-[ACP] + malonyl-[ACP] + H(+) = a 3-oxoacyl-[ACP] + holo-[ACP] + CO2. The catalysed reaction is (9Z)-hexadecenoyl-[ACP] + malonyl-[ACP] + H(+) = 3-oxo-(11Z)-octadecenoyl-[ACP] + holo-[ACP] + CO2. It functions in the pathway lipid metabolism; fatty acid biosynthesis. Functionally, involved in the type II fatty acid elongation cycle. Catalyzes the elongation of a wide range of acyl-ACP by the addition of two carbons from malonyl-ACP to an acyl acceptor. Can efficiently catalyze the conversion of palmitoleoyl-ACP (cis-hexadec-9-enoyl-ACP) to cis-vaccenoyl-ACP (cis-octadec-11-enoyl-ACP), an essential step in the thermal regulation of fatty acid composition. This chain is 3-oxoacyl-[acyl-carrier-protein] synthase 2 (fabF), found in Staphylococcus aureus (strain Mu50 / ATCC 700699).